Here is a 259-residue protein sequence, read N- to C-terminus: 1,2-dihydroxy-1,2-dihydronaphthalene dehydrogenase (259 aa).

NAD(+) is bound at residue 8–32 (SITGAGSGIGLELVRSFKSAGYYVS). Substrate is bound at residue serine 140. The Proton acceptor role is filled by tyrosine 153.

Belongs to the short-chain dehydrogenases/reductases (SDR) family.

It carries out the reaction (1R,2S)-1,2-dihydronaphthalene-1,2-diol + NAD(+) = naphthalene-1,2-diol + NADH + H(+). The catalysed reaction is cis-1,2-dihydroxy-1,2-dihydrodibenzothiophene + NAD(+) = 1,2-dihydroxydibenzothiophene + NADH + H(+). It functions in the pathway aromatic compound metabolism; naphthalene degradation. Its function is as follows. Catalyzes the oxidation of naphthalene dihydrodiol into 1,2-dihydroxynaphthalene. The protein is 1,2-dihydroxy-1,2-dihydronaphthalene dehydrogenase (doxE) of Pseudomonas sp. (strain C18).